Consider the following 209-residue polypeptide: Thymidylate kinase (209 aa).

10-17 (GLDGAGKS) contacts ATP.

This sequence belongs to the thymidylate kinase family.

The catalysed reaction is dTMP + ATP = dTDP + ADP. Phosphorylation of dTMP to form dTDP in both de novo and salvage pathways of dTTP synthesis. The polypeptide is Thymidylate kinase (Francisella tularensis subsp. tularensis (strain FSC 198)).